A 109-amino-acid polypeptide reads, in one-letter code: RNA-binding protein Hfq (109 aa).

The Sm domain maps to 9-68 (DPFLNALRKEKVSVSVYLVNGIKLQGQVEAFDQFCIVLRNTVNQMVYKHAISTIVPAKSV).

Belongs to the Hfq family. In terms of assembly, homohexamer.

In terms of biological role, RNA chaperone that binds small regulatory RNA (sRNAs) and mRNAs to facilitate mRNA translational regulation in response to envelope stress, environmental stress and changes in metabolite concentrations. Also binds with high specificity to tRNAs. The protein is RNA-binding protein Hfq of Francisella philomiragia subsp. philomiragia (strain ATCC 25017 / CCUG 19701 / FSC 153 / O#319-036).